The chain runs to 373 residues: MRVDLFDFDLPDERIALRPAEPRDSARLLVVNPHAESGPHAESVPHAESALSDHHVYDLPSFLRAGDALVFNDTKVIPAQLEGIRHRDGAGGQQVSATLHMRIGPSRWKAFAKPGKRIKEGDRIAFGHSGESCFLGALDATVEEKGEAGEVTLAFDLTGPALDEAIAAVGHIPLPPYIAAKRPEDERDRADYQTIYAREEGAVAAPTAGLHFTPDLFAALDKAGIERHFVTLHVGAGTFLPVKADDTDDHKMHLESGYVSAEIAARLNAVKARGGRIVCVGTTSLRLIESAAGEDGKIKPWAGATGIFITPGYRFKAVDMLMTNFHLPRSTLFMLVSAFSGFETMRAAYEHAISTGYRFYSYGDASLLFRKDK.

Belongs to the QueA family. Monomer.

It is found in the cytoplasm. It carries out the reaction 7-aminomethyl-7-carbaguanosine(34) in tRNA + S-adenosyl-L-methionine = epoxyqueuosine(34) in tRNA + adenine + L-methionine + 2 H(+). It participates in tRNA modification; tRNA-queuosine biosynthesis. Transfers and isomerizes the ribose moiety from AdoMet to the 7-aminomethyl group of 7-deazaguanine (preQ1-tRNA) to give epoxyqueuosine (oQ-tRNA). The polypeptide is S-adenosylmethionine:tRNA ribosyltransferase-isomerase (Rhizobium etli (strain CIAT 652)).